The primary structure comprises 354 residues: MELLMCSGQAESGGSSSTESSSLSGGLRFGQKIYFEDGSGSRSKNRVNTVRKSSTTARCQVEGCRMDLSNVKAYYSRHKVCCIHSKSSKVIVSGLHQRFCQQCSRFHQLSEFDLEKRSCRRRLACHNERRRKPQPTTALFTSHYSRIAPSLYGNPNAAMIKSVLGDPTAWSTARSVMQRPGPWQINPVRETHPHMNVLSHGSSSFTTCPEMINNNSTDSSCALSLLSNSYPIHQQQLQTPTNTWRPSSGFDSMISFSDKVTMAQPPPISTHQPPISTHQQYLSQTWEVIAGEKSNSHYMSPVSQISEPADFQISNGTTMGGFELYLHQQVLKQYMEPENTRAYDSSPQHFNWSL.

The interval 1–25 is disordered; it reads MELLMCSGQAESGGSSSTESSSLSG. Residues 7-25 show a composition bias toward low complexity; sequence SGQAESGGSSSTESSSLSG. An SBP-type zinc finger spans residues 56–133; that stretch reads TARCQVEGCR…ACHNERRRKP (78 aa). Residues C59, C64, C81, H84, C100, C103, H107, and C119 each contribute to the Zn(2+) site. The Bipartite nuclear localization signal motif lies at 116–132; that stretch reads KRSCRRRLACHNERRRK.

Requires Zn(2+) as cofactor.

Its subcellular location is the nucleus. Functionally, trans-acting factor that binds specifically to the consensus nucleotide sequence 5'-TNCGTACAA-3'. The polypeptide is Squamosa promoter-binding-like protein 15 (SPL15) (Arabidopsis thaliana (Mouse-ear cress)).